The primary structure comprises 336 residues: Glycerol-3-phosphate dehydrogenase [NAD(P)+] (336 aa).

Ser16, Tyr17, His37, and Lys111 together coordinate NADPH. Residues Lys111, Gly140, and Thr142 each contribute to the sn-glycerol 3-phosphate site. Ala144 provides a ligand contact to NADPH. Lys196, Asp249, Ser259, Arg260, and Asn261 together coordinate sn-glycerol 3-phosphate. Lys196 acts as the Proton acceptor in catalysis. Arg260 contributes to the NADPH binding site. Residues Val284 and Glu286 each contribute to the NADPH site.

The protein belongs to the NAD-dependent glycerol-3-phosphate dehydrogenase family.

The protein localises to the cytoplasm. The enzyme catalyses sn-glycerol 3-phosphate + NAD(+) = dihydroxyacetone phosphate + NADH + H(+). It carries out the reaction sn-glycerol 3-phosphate + NADP(+) = dihydroxyacetone phosphate + NADPH + H(+). It functions in the pathway membrane lipid metabolism; glycerophospholipid metabolism. Functionally, catalyzes the reduction of the glycolytic intermediate dihydroxyacetone phosphate (DHAP) to sn-glycerol 3-phosphate (G3P), the key precursor for phospholipid synthesis. This is Glycerol-3-phosphate dehydrogenase [NAD(P)+] from Haemophilus ducreyi (strain 35000HP / ATCC 700724).